The primary structure comprises 276 residues: N-acetylmuramoyl-L-alanine amidase AmiD (276 aa).

An N-terminal signal peptide occupies residues 1 to 16 (MRRFFWLVAAALLLAG). Residue Cys-17 is the site of N-palmitoyl cysteine attachment. The S-diacylglycerol cysteine moiety is linked to residue Cys-17. The region spanning 42–179 (PRIKVLVIHY…APQRKDDPGP (138 aa)) is the N-acetylmuramoyl-L-alanine amidase domain. Zn(2+) is bound at residue His-50. Residue 51-52 (YT) participates in substrate binding. The active-site Proton acceptor is the Glu-119. His-166 and Asp-176 together coordinate Zn(2+).

It belongs to the N-acetylmuramoyl-L-alanine amidase 2 family. Zn(2+) serves as cofactor.

Its subcellular location is the cell outer membrane. It catalyses the reaction Hydrolyzes the link between N-acetylmuramoyl residues and L-amino acid residues in certain cell-wall glycopeptides.. This chain is N-acetylmuramoyl-L-alanine amidase AmiD (amiD), found in Escherichia coli (strain K12).